Consider the following 693-residue polypeptide: Transforming growth factor beta activator LRRC33 (693 aa).

Residues 1 to 19 (MEFPPLWLCLGFHFLIVEW) form the signal peptide. The Extracellular segment spans residues 20–651 (RSGPGTATAA…CKWEQVDTGL (632 aa)). One can recognise an LRRNT domain in the interval 29–56 (ASQGGCKVVDGVADCRGLNLASVPSSLP). 10 LRR repeats span residues 58–79 (HSRM…SLQA), 82–103 (RLEN…AFRE), 106–127 (HLRN…SAAA), 133–155 (GLRR…MLQN), 158–179 (SLEV…IFEG), 182–203 (HLVE…AFDG), 206–227 (ELRR…SLTQ), 228–239 (LRFLNVSYNILE), 251–272 (ELEI…PQCG), and 273–294 (KLHT…YNTS). Residues Asn74 and Asn85 are each glycosylated (N-linked (GlcNAc...) asparagine). The N-linked (GlcNAc...) asparagine glycan is linked to Asn155. N-linked (GlcNAc...) asparagine glycosylation is present at Asn232. Asn292, Asn309, and Asn312 each carry an N-linked (GlcNAc...) asparagine glycan. 11 LRR repeats span residues 329-350 (ALRF…FLKK), 353-374 (SLSH…EHEP), 377-398 (ALTE…PGLT), 403-424 (NLRV…LFDN), 427-448 (SITT…VPVD), 463-484 (SLRS…PFQG), 486-507 (SLTH…SPLW), 512-533 (TLQV…MDFS), 537-558 (NLRA…KGSL), 559-580 (ALRT…VVSE), and 585-605 (GLQT…EGWG). 2 N-linked (GlcNAc...) asparagine glycosylation sites follow: Asn408 and Asn424. N-linked (GlcNAc...) asparagine glycosylation is present at Asn500. An LRRCT domain is found at 606–644 (ALQQHFKTVADLSMVTCNLSSKIVRVVELPEGLPQGCKW). The N-linked (GlcNAc...) asparagine glycan is linked to Asn623. A helical membrane pass occupies residues 652–672 (FYLVLILPSCLTLLVACTVVF). The Cytoplasmic portion of the chain corresponds to 673–693 (LTFKKPLLQVIKSRCHWSSIY).

This sequence belongs to the LRRC32/LRRC33 family. In terms of assembly, interacts with TGFB1; associates via disulfide bonds with the Latency-associated peptide chain (LAP) regulatory chain of TGFB1, leading to regulate activation of TGF-beta-1. Interacts (via LRR repeats) with TLR2, TLR3, TLR4, TLR9 and probably other Toll-like receptors. Interacts with CYBB/NOX2; the interaction is direct. Post-translationally, N-glycosylated. As to expression, mainly expressed in cells of hematopoietic origin, such as in immune organs such as lymph nodes, thymus and spleen. Among leukocytes, expressed at higher level in myeloid cell such as macrophages, neutrophils and dendritic cells. Highly expressed in central nervous system-resident macrophages, including microglia and perivascular macrophages.

The protein resides in the cell membrane. The protein localises to the endoplasmic reticulum membrane. In terms of biological role, key regulator of transforming growth factor beta-1 (TGFB1) specifically required for microglia function in the nervous system. Required for activation of latent TGF-beta-1 in macrophages and microglia: associates specifically via disulfide bonds with the Latency-associated peptide (LAP), which is the regulatory chain of TGFB1, and regulates integrin-dependent activation of TGF-beta-1. TGF-beta-1 activation mediated by LRRC33/NRROS is highly localized: there is little spreading of TGF-beta-1 activated from one microglial cell to neighboring microglia, suggesting the existence of localized and selective activation of TGF-beta-1 by LRRC33/NRROS. Indirectly plays a role in Toll-like receptor (TLR) signaling: ability to inhibit TLR-mediated NF-kappa-B activation and cytokine production is probably a consequence of its role in TGF-beta-1 signaling. In Mus musculus (Mouse), this protein is Transforming growth factor beta activator LRRC33.